The chain runs to 159 residues: 2-C-methyl-D-erythritol 2,4-cyclodiphosphate synthase (159 aa).

The a divalent metal cation site is built by D8 and H10. Residues 8 to 10 (DVH) and 34 to 35 (HS) contribute to the 4-CDP-2-C-methyl-D-erythritol 2-phosphate site. H42 is an a divalent metal cation binding site. 4-CDP-2-C-methyl-D-erythritol 2-phosphate is bound by residues 56-58 (DIG), 61-65 (FPDTD), 100-106 (AQAPKML), 132-135 (TTTE), F139, and R142.

This sequence belongs to the IspF family. In terms of assembly, homotrimer. It depends on a divalent metal cation as a cofactor.

It carries out the reaction 4-CDP-2-C-methyl-D-erythritol 2-phosphate = 2-C-methyl-D-erythritol 2,4-cyclic diphosphate + CMP. It participates in isoprenoid biosynthesis; isopentenyl diphosphate biosynthesis via DXP pathway; isopentenyl diphosphate from 1-deoxy-D-xylulose 5-phosphate: step 4/6. Functionally, involved in the biosynthesis of isopentenyl diphosphate (IPP) and dimethylallyl diphosphate (DMAPP), two major building blocks of isoprenoid compounds. Catalyzes the conversion of 4-diphosphocytidyl-2-C-methyl-D-erythritol 2-phosphate (CDP-ME2P) to 2-C-methyl-D-erythritol 2,4-cyclodiphosphate (ME-CPP) with a corresponding release of cytidine 5-monophosphate (CMP). The polypeptide is 2-C-methyl-D-erythritol 2,4-cyclodiphosphate synthase (Escherichia coli O127:H6 (strain E2348/69 / EPEC)).